We begin with the raw amino-acid sequence, 410 residues long: Cysteine desulfurase IscS (410 aa).

Pyridoxal 5'-phosphate contacts are provided by residues 79–80 (AT), Asn-159, Gln-187, and 207–209 (SGH). Lys-210 bears the N6-(pyridoxal phosphate)lysine mark. Residue Thr-248 coordinates pyridoxal 5'-phosphate. The active-site Cysteine persulfide intermediate is the Cys-334. Cys-334 contacts [2Fe-2S] cluster.

It belongs to the class-V pyridoxal-phosphate-dependent aminotransferase family. NifS/IscS subfamily. In terms of assembly, homodimer. Forms a heterotetramer with IscU, interacts with other sulfur acceptors. It depends on pyridoxal 5'-phosphate as a cofactor.

The protein localises to the cytoplasm. It carries out the reaction (sulfur carrier)-H + L-cysteine = (sulfur carrier)-SH + L-alanine. Its pathway is cofactor biosynthesis; iron-sulfur cluster biosynthesis. Functionally, master enzyme that delivers sulfur to a number of partners involved in Fe-S cluster assembly, tRNA modification or cofactor biosynthesis. Catalyzes the removal of elemental sulfur atoms from cysteine to produce alanine. Functions as a sulfur delivery protein for Fe-S cluster synthesis onto IscU, an Fe-S scaffold assembly protein, as well as other S acceptor proteins. In Ehrlichia chaffeensis (strain ATCC CRL-10679 / Arkansas), this protein is Cysteine desulfurase IscS.